We begin with the raw amino-acid sequence, 1083 residues long: Regulator of the glycerol channel 1 (1083 aa).

2 disordered regions span residues 1–46 (MSDY…GSSD) and 69–89 (LKNE…KENK). Over residues 13-31 (GGISKQPATPGSTRSSSRN) the composition is skewed to polar residues. Phosphoserine occurs at positions 136, 249, 252, 481, and 537. The PH domain occupies 495-606 (CIRVGYLLKK…DCSLKDSTDS (112 aa)). The segment at 534–582 (DSKSPRSKNKPVVEQSDISRVNKDGTNAGSHPSSKGTQDPKLTKRRKGL) is disordered. The segment covering 549–570 (SDISRVNKDGTNAGSHPSSKGT) has biased composition (polar residues). 3 positions are modified to phosphoserine: Ser-652, Ser-765, and Ser-813. Phosphothreonine occurs at positions 817 and 857. Phosphoserine occurs at positions 866, 879, 918, 966, 969, and 975. The segment at 979–1083 (EENRTQNCSG…TVPATSASSK (105 aa)) is disordered. 3 stretches are compositionally biased toward polar residues: residues 983–992 (TQNCSGSRKS), 1043–1061 (LKKT…VSND), and 1071–1083 (STNT…ASSK). Residues Ser-1059, Ser-1081, and Ser-1082 each carry the phosphoserine modification.

It belongs to the RGC1 family.

The protein localises to the cytoplasm. Positive regulator of FPS1 glycerol channel required for the glycerol efflux. The sequence is that of Regulator of the glycerol channel 1 (RGC1) from Saccharomyces cerevisiae (strain ATCC 204508 / S288c) (Baker's yeast).